A 147-amino-acid chain; its full sequence is Angiogenin (147 aa).

Positions 1-24 (MVILLGPLLLVFMLGLGLAPLSLA) are cleaved as a signal peptide. Catalysis depends on H37, which acts as the Proton acceptor. TRNA is bound by residues R45 and D46. 3 disulfides stabilise this stretch: C50–C104, C63–C115, and C81–C130. Residues 55-59 (KQRGL) carry the Nucleolar localization signal motif. Residues C104 and I126 each coordinate tRNA. The active-site Proton donor is the H137.

This sequence belongs to the pancreatic ribonuclease family. Homodimer. Interacts with RNH1; inhibiting ANG ribonuclease activity. Interacts with PCNA.

The protein resides in the secreted. It is found in the nucleus. Its subcellular location is the nucleolus. The protein localises to the cytoplasm. It localises to the stress granule. With respect to regulation, has weak tRNA ribonuclease activity by itself due to partial autoinhibition by its C-terminus, which folds into a short alpha-helix that partially occludes the substrate-binding site. In absence of stress, the ribonuclease activity is inhibited by RNH1 in the cytoplasm. In response to stress, dissociates from RNH1 in the cytoplasm and associates with cytoplasmic ribosomes with vacant A-sites: ribosomes directly activate the tRNA ribonuclease activity of ANG by refolding the C-terminal alpha-helix. In response to stress, the angiogenic activity of ANG is inhibited by RNH1 in the nucleus. Its function is as follows. Secreted ribonuclease that can either promote or restrict cell proliferation of target cells, depending on the context. Endocytosed in target cells via its receptor PLXNB2 and translocates to the cytoplasm or nucleus. Under stress conditions, localizes to the cytoplasm and promotes the assembly of stress granules (SGs): specifically cleaves a subset of tRNAs within anticodon loops to produce tRNA-derived stress-induced fragments (tiRNAs), resulting in translation repression and inhibition of cell proliferation. tiRNas also prevent formation of apoptosome, thereby promoting cell survival. Preferentially cleaves RNAs between a pyrimidine and an adenosine residue, suggesting that it cleaves the anticodon loop of tRNA(Ala) (32-UUAGCAU-38) after positions 33 and 36. Cleaves a subset of tRNAs, including tRNA(Ala), tRNA(Glu), tRNA(Gly), tRNA(Lys), tRNA(Val), tRNA(His), tRNA(Asp) and tRNA(Sec). Under growth conditions and in differentiated cells, translocates to the nucleus and stimulates ribosomal RNA (rRNA) transcription, including that containing the initiation site sequences of 45S rRNA, thereby promoting cell growth and proliferation. Angiogenin induces vascularization of normal and malignant tissues via its ability to promote rRNA transcription. Involved in hematopoietic stem and progenitor cell (HSPC) growth and survival by promoting rRNA transcription in growth conditions and inhibiting translation in response to stress, respectively. Mediates the crosstalk between myeloid and intestinal epithelial cells to protect the intestinal epithelial barrier integrity: secreted by myeloid cells and promotes intestinal epithelial cells proliferation and survival. Also mediates osteoclast-endothelial cell crosstalk in growing bone: produced by osteoclasts and protects the neighboring vascular cells against senescence by promoting rRNA transcription. This Sus scrofa (Pig) protein is Angiogenin (ANG).